The primary structure comprises 270 residues: tRNA pseudouridine synthase A (270 aa).

Catalysis depends on Asp51, which acts as the Nucleophile. Tyr109 is a binding site for substrate.

It belongs to the tRNA pseudouridine synthase TruA family. Homodimer.

The enzyme catalyses uridine(38/39/40) in tRNA = pseudouridine(38/39/40) in tRNA. Formation of pseudouridine at positions 38, 39 and 40 in the anticodon stem and loop of transfer RNAs. This chain is tRNA pseudouridine synthase A, found in Burkholderia multivorans (strain ATCC 17616 / 249).